The primary structure comprises 1117 residues: Zinc finger E-box-binding homeobox 1 (1117 aa).

2 disordered regions span residues 1–103 (MADG…QNHD) and 122–143 (APEE…NGTP). Over residues 15 to 30 (PRRNNVTNYNTVVEAN) the composition is skewed to low complexity. Ser-31 and Ser-33 each carry phosphoserine. The C2H2-type 1 zinc-finger motif lies at 150–173 (LTCPYCDRGYKRFTSLKEHIKYRH). Glycyl lysine isopeptide (Lys-Gly) (interchain with G-Cter in SUMO2) cross-links involve residues Lys-166 and Lys-175. C2H2-type zinc fingers lie at residues 180–202 (FSCS…MTSH) and 220–242 (FKCT…LRIH). The segment at 248–272 (YECPNCKKRFSHSGSYSSHISSKKC) adopts a C2H2-type 4; atypical zinc-finger fold. The disordered stretch occupies residues 278-307 (VNGRPRSGLKTSQCSSPSLSTSPGSPTRPQ). Lys-287 participates in a covalent cross-link: Glycyl lysine isopeptide (Lys-Gly) (interchain with G-Cter in SUMO2). Over residues 288–304 (TSQCSSPSLSTSPGSPT) the composition is skewed to low complexity. Phosphoserine occurs at positions 293 and 302. Glycyl lysine isopeptide (Lys-Gly) (interchain with G-Cter in SUMO2) cross-links involve residues Lys-311 and Lys-315. Lys-327 is covalently cross-linked (Glycyl lysine isopeptide (Lys-Gly) (interchain with G-Cter in SUMO); alternate). Lys-327 is covalently cross-linked (Glycyl lysine isopeptide (Lys-Gly) (interchain with G-Cter in SUMO2); alternate). Residues Lys-419, Lys-473, Lys-484, Lys-495, and Lys-528 each participate in a glycyl lysine isopeptide (Lys-Gly) (interchain with G-Cter in SUMO2) cross-link. Disordered regions lie at residues 476–501 (IPAP…TDKS), 528–566 (KHYD…SQPP), and 613–687 (GQIP…SPLN). The span at 484–501 (KSEKLPEDLTVKSETDKS) shows a compositional bias: basic and acidic residues. Residues 559 to 618 (DLSPSQPPLKNLLSLLKAYYALNAQPSTEELSKIADSVNLPLDGVKKWFEKMQAGQIPGQ) constitute a DNA-binding region (homeobox; atypical). 4 positions are modified to phosphoserine: Ser-657, Ser-664, Ser-671, and Ser-678. The span at 673 to 687 (MNGSRSCTSSPSPLN) shows a compositional bias: polar residues. At Thr-680 the chain carries Phosphothreonine. Ser-682 carries the phosphoserine modification. Residue Lys-752 forms a Glycyl lysine isopeptide (Lys-Gly) (interchain with G-Cter in SUMO); alternate linkage. Lys-752 participates in a covalent cross-link: Glycyl lysine isopeptide (Lys-Gly) (interchain with G-Cter in SUMO2); alternate. Residues 834-876 (PPVKVIQPNGNQDERQDTSSEGVSTVEDQNDSDSTPPKKKTRK) form a disordered region. Positions 852–868 (SSEGVSTVEDQNDSDST) are enriched in polar residues. 2 consecutive C2H2-type zinc fingers follow at residues 882 to 904 (YACD…KYEH) and 910 to 932 (HECG…MRLH). A C2H2-type 7; atypical zinc finger spans residues 938-959 (YQCDKCGKRFSHSGSYSQHMNH). The segment at 991-1117 (EHVGARASPS…QLSEEKTNEA (127 aa)) is disordered. 3 stretches are compositionally biased toward acidic residues: residues 1013–1032 (EEDE…MEEL), 1042–1069 (QGEE…DEAE), and 1098–1109 (SEMESESESEQL).

This sequence belongs to the delta-EF1/ZFH-1 C2H2-type zinc-finger family. Interacts (via N-terminus) with SMARCA4/BRG1. In terms of processing, ubiquitinated, leading to degradation in a proteasome-dependent manner. Deubiquitinated by USP51, leading to stabilization. In terms of tissue distribution, expressed in the external germinal layer (EGL) and internal granular layer (IGL) of the cerebellum (at protein level).

Its subcellular location is the nucleus. Functionally, acts as a transcriptional repressor. Binds to E-box sequences in the immunoglobulin heavy chain enhancer as well as in the regulatory regions of many other tissue-specific genes. Represses E-cadherin promoter and induces an epithelial-mesenchymal transition (EMT) by recruiting SMARCA4/BRG1. Represses BCL6 transcription in the presence of the corepressor CTBP1. Positively regulates neuronal differentiation. Represses RCOR1 transcription activation during neurogenesis. Represses transcription by binding to the E box (5'-CANNTG-3'). In the absence of TGFB1, acts as a repressor of COL1A2 transcription via binding to the E-box in the upstream enhancer region. Promotes tumorigenicity by repressing stemness-inhibiting microRNAs. In Mus musculus (Mouse), this protein is Zinc finger E-box-binding homeobox 1.